A 116-amino-acid chain; its full sequence is Protein AV2 (116 aa).

Belongs to the geminiviridae protein AV2/V2 family. As to quaternary structure, interacts with host SGS3.

The protein localises to the host cytoplasm. It localises to the host perinuclear region. Functionally, through its interaction with host SGS3, acts as a suppressor of RNA-mediated gene silencing, also known as post-transcriptional gene silencing (PTGS), a mechanism of plant viral defense that limits the accumulation of viral RNAs. The sequence is that of Protein AV2 from Mungbean yellow mosaic virus (strain Vigna) (MYMV).